A 1415-amino-acid chain; its full sequence is DNA-directed RNA polymerase subunit beta' (1415 aa).

Positions 72, 74, 87, and 90 each coordinate Zn(2+). Mg(2+) is bound by residues Asp463, Asp465, and Asp467. Residues Cys811, Cys885, Cys892, and Cys895 each coordinate Zn(2+).

This sequence belongs to the RNA polymerase beta' chain family. In terms of assembly, the RNAP catalytic core consists of 2 alpha, 1 beta, 1 beta' and 1 omega subunit. When a sigma factor is associated with the core the holoenzyme is formed, which can initiate transcription. Requires Mg(2+) as cofactor. It depends on Zn(2+) as a cofactor.

It catalyses the reaction RNA(n) + a ribonucleoside 5'-triphosphate = RNA(n+1) + diphosphate. Its function is as follows. DNA-dependent RNA polymerase catalyzes the transcription of DNA into RNA using the four ribonucleoside triphosphates as substrates. The protein is DNA-directed RNA polymerase subunit beta' of Cereibacter sphaeroides (strain ATCC 17025 / ATH 2.4.3) (Rhodobacter sphaeroides).